A 298-amino-acid polypeptide reads, in one-letter code: D-alanine--D-alanine ligase (298 aa).

Positions 97 to 290 (FYSLFKNYIQ…FDELINIIIK (194 aa)) constitute an ATP-grasp domain. 124–173 (PFIIKPRKSGSSKGVYIIHNENEYKFYLEKDLKEFQEVLVQEYIKGREIT) provides a ligand contact to ATP. Mg(2+) is bound by residues Asp245, Glu257, and Asn259.

This sequence belongs to the D-alanine--D-alanine ligase family. Mg(2+) serves as cofactor. Requires Mn(2+) as cofactor.

The protein localises to the cytoplasm. The catalysed reaction is 2 D-alanine + ATP = D-alanyl-D-alanine + ADP + phosphate + H(+). The protein operates within cell wall biogenesis; peptidoglycan biosynthesis. Its function is as follows. Cell wall formation. This is D-alanine--D-alanine ligase from Petrotoga mobilis (strain DSM 10674 / SJ95).